The chain runs to 526 residues: UDP-N-acetylmuramoyl-L-alanyl-D-glutamate--2,6-diaminopimelate ligase (526 aa).

UDP-N-acetyl-alpha-D-muramoyl-L-alanyl-D-glutamate contacts are provided by Leu-48 and Ser-50. 136-142 (GTSGKTT) serves as a coordination point for ATP. Residues 178–179 (TT), Ser-205, and Arg-213 each bind UDP-N-acetyl-alpha-D-muramoyl-L-alanyl-D-glutamate. Lys-245 bears the N6-carboxylysine mark. Residues Arg-408, 432-435 (DNPR), Gly-490, and Glu-494 contribute to the meso-2,6-diaminopimelate site. The Meso-diaminopimelate recognition motif motif lies at 432 to 435 (DNPR).

It belongs to the MurCDEF family. MurE subfamily. It depends on Mg(2+) as a cofactor. Carboxylation is probably crucial for Mg(2+) binding and, consequently, for the gamma-phosphate positioning of ATP.

The protein resides in the cytoplasm. It carries out the reaction UDP-N-acetyl-alpha-D-muramoyl-L-alanyl-D-glutamate + meso-2,6-diaminopimelate + ATP = UDP-N-acetyl-alpha-D-muramoyl-L-alanyl-gamma-D-glutamyl-meso-2,6-diaminopimelate + ADP + phosphate + H(+). It participates in cell wall biogenesis; peptidoglycan biosynthesis. In terms of biological role, catalyzes the addition of meso-diaminopimelic acid to the nucleotide precursor UDP-N-acetylmuramoyl-L-alanyl-D-glutamate (UMAG) in the biosynthesis of bacterial cell-wall peptidoglycan. This Corynebacterium efficiens (strain DSM 44549 / YS-314 / AJ 12310 / JCM 11189 / NBRC 100395) protein is UDP-N-acetylmuramoyl-L-alanyl-D-glutamate--2,6-diaminopimelate ligase.